An 853-amino-acid polypeptide reads, in one-letter code: G-type lectin S-receptor-like serine/threonine-protein kinase SRK (853 aa).

The N-terminal stretch at 1 to 31 (MRGELPNKHHSYTFFVFLFFFLILFPDLSIS) is a signal peptide. Residues 32–441 (VNTLSATESL…FGERRTIRGK (410 aa)) lie on the Extracellular side of the membrane. The region spanning 34-154 (TLSATESLTI…KINESDEFLW (121 aa)) is the Bulb-type lectin domain. Asn-46, Asn-120, Asn-147, and Asn-243 each carry an N-linked (GlcNAc...) asparagine glycan. The region spanning 293–329 (PKDTCDLYGICGPYAYCDMSTSPTCNCIKGFQPLSPQ) is the EGF-like; atypical domain. 4 disulfide bridges follow: Cys-297–Cys-309, Cys-303–Cys-317, Cys-378–Cys-403, and Cys-382–Cys-388. A PAN domain is found at 348 to 428 (CGEDRFFRLM…DGQDLFVRLA (81 aa)). N-linked (GlcNAc...) asparagine glycosylation is present at Asn-387. A helical membrane pass occupies residues 442–462 (IIGLIIGISLMLVLSFIIYCF). Residues 463–853 (WKKKQKRARA…QITVSVINAR (391 aa)) lie on the Cytoplasmic side of the membrane. One can recognise a Protein kinase domain in the interval 524 to 802 (FSDSNILGRG…PKMSSVVLML (279 aa)). ATP is bound by residues 530–538 (LGRGGFGIV) and Lys-552. Ser-558 carries the post-translational modification Phosphoserine. Residues 613 to 631 (TQSSNKLNWQTRFSIINGI) form a caM-binding region. Asp-650 serves as the catalytic Proton acceptor. Phosphoserine is present on residues Ser-654 and Ser-667. At Thr-684 the chain carries Phosphothreonine. Positions 807 to 838 (GEIPQPKRPGYCVGRSSLDTADSSSSTKRDSE) are disordered. Low complexity predominate over residues 822–832 (SSLDTADSSSS). Position 831 is a phosphoserine (Ser-831).

The protein belongs to the protein kinase superfamily. Ser/Thr protein kinase family.

Its subcellular location is the cell membrane. It carries out the reaction L-seryl-[protein] + ATP = O-phospho-L-seryl-[protein] + ADP + H(+). The enzyme catalyses L-threonyl-[protein] + ATP = O-phospho-L-threonyl-[protein] + ADP + H(+). Its function is as follows. Female specificity determinant of self-incompatibility. The polypeptide is G-type lectin S-receptor-like serine/threonine-protein kinase SRK (SRK) (Arabidopsis thaliana (Mouse-ear cress)).